The sequence spans 318 residues: AT-hook motif nuclear-localized protein 7 (318 aa).

Disordered stretches follow at residues 1-76 and 241-318; these read METS…PSSS and SDQQ…LPVD. The Bipartite nuclear localization signal motif lies at 56–64; that stretch reads KKRRGRPRK. A DNA-binding region (a.T hook) is located at residues 56–68; sequence KKRRGRPRKYEAN. Residues 120–259 enclose the PPC domain; sequence GSNFTPHVIT…RKQRVEHAPA (140 aa). Over residues 243–256 the composition is skewed to basic and acidic residues; the sequence is QQDHQKPRKQRVEH. Over residues 264–274 the composition is skewed to pro residues; the sequence is VPPPPSPPPPA. The span at 288–312 shows a compositional bias: polar residues; that stretch reads PPSSFGISSWTNGQDMPRNSATDIN.

It is found in the nucleus. In terms of biological role, transcription factor that specifically binds AT-rich DNA sequences related to the nuclear matrix attachment regions (MARs). This chain is AT-hook motif nuclear-localized protein 7, found in Arabidopsis thaliana (Mouse-ear cress).